The sequence spans 189 residues: Thymidine kinase (189 aa).

Residues Gly9–Thr16 and Asp85–Gln88 each bind ATP. Glu86 (proton acceptor) is an active-site residue. Zn(2+)-binding residues include Cys143, Cys146, Cys180, and His183.

It belongs to the thymidine kinase family. As to quaternary structure, homotetramer.

It is found in the cytoplasm. It catalyses the reaction thymidine + ATP = dTMP + ADP + H(+). The polypeptide is Thymidine kinase (Streptococcus pyogenes serotype M1).